The following is a 289-amino-acid chain: ATP synthase gamma chain (289 aa).

Belongs to the ATPase gamma chain family. In terms of assembly, F-type ATPases have 2 components, CF(1) - the catalytic core - and CF(0) - the membrane proton channel. CF(1) has five subunits: alpha(3), beta(3), gamma(1), delta(1), epsilon(1). CF(0) has three main subunits: a, b and c.

It localises to the cell membrane. Its function is as follows. Produces ATP from ADP in the presence of a proton gradient across the membrane. The gamma chain is believed to be important in regulating ATPase activity and the flow of protons through the CF(0) complex. The polypeptide is ATP synthase gamma chain (Lactococcus lactis subsp. lactis (strain IL1403) (Streptococcus lactis)).